Here is a 282-residue protein sequence, read N- to C-terminus: uncharacterized protein (282 aa).

Tyrosine 50 serves as the catalytic Proton donor. A substrate-binding site is contributed by histidine 115.

Belongs to the aldo/keto reductase family.

This is an uncharacterized protein from Saccharomyces cerevisiae (strain ATCC 204508 / S288c) (Baker's yeast).